A 275-amino-acid polypeptide reads, in one-letter code: Protein MGF 110-11L (275 aa).

A helical transmembrane segment spans residues 5 to 25; it reads LGLLLGYSVLILTHELPDLSA. Asn-61 carries an N-linked (GlcNAc...) asparagine; by host glycan. The next 2 membrane-spanning stretches (helical) occupy residues 127 to 147 and 149 to 169; these read HCCF…FAYH and NLHL…IWLS.

It belongs to the asfivirus MGF 110 family.

It localises to the host membrane. Functionally, plays a role in virus cell tropism, and may be required for efficient virus replication in macrophages. The protein is Protein MGF 110-11L of African swine fever virus (isolate Pig/Kenya/KEN-50/1950) (ASFV).